A 160-amino-acid polypeptide reads, in one-letter code: Putative NrdI-like protein (160 aa).

Belongs to the NrdI family.

In Streptococcus pyogenes serotype M3 (strain ATCC BAA-595 / MGAS315), this protein is Putative NrdI-like protein.